The following is a 609-amino-acid chain: DNA polymerase alpha subunit B (609 aa).

The residue at position 155 (S155) is a Phosphoserine. T164 is modified (phosphothreonine). 2 positions are modified to phosphoserine: S166 and S168.

The protein belongs to the DNA polymerase alpha subunit B family. In terms of assembly, component of the alpha DNA polymerase complex (also known as the alpha DNA polymerase-primase complex) consisting of four subunits: the catalytic subunit PolA1, the regulatory subunit PolA2, and the primase complex subunits Prim1 and Prim2 respectively. PolA1 associates with the DNA primase complex before association with PolA2. Post-translationally, phosphorylated in embryos until cycle 13. As to expression, expressed in embryos (at protein level).

The protein localises to the nucleus. Its function is as follows. Accessory subunit of the DNA polymerase alpha complex (also known as the alpha DNA polymerase-primase complex) which plays an essential role in the initiation of DNA synthesis. During the S phase of the cell cycle, the DNA polymerase alpha complex (composed of a catalytic subunit PolA1, an accessory subunit PolA2 and two primase subunits, the catalytic subunit Prim1 and the regulatory subunit Prim2) is recruited to DNA at the replicative forks. The primase subunit of the polymerase alpha complex initiates DNA synthesis by oligomerising short RNA primers on both leading and lagging strands. These primers are initially extended by the polymerase alpha catalytic subunit and subsequently transferred to polymerase delta and polymerase epsilon for processive synthesis on the lagging and leading strand, respectively. This chain is DNA polymerase alpha subunit B, found in Drosophila melanogaster (Fruit fly).